The chain runs to 714 residues: Hormonally up-regulated neu tumor-associated kinase (714 aa).

Residues 1 to 16 are compositionally biased toward low complexity; the sequence is MPAAAGDGLLGEPAAP. A disordered region spans residues 1-28; sequence MPAAAGDGLLGEPAAPGGDGGAEDTTRP. Positions 62 to 320 constitute a Protein kinase domain; sequence LIGSRKLGEG…IQQALANRWL (259 aa). ATP contacts are provided by residues 68 to 76 and lysine 91; that span reads LGEGSFAKV. The active-site Proton acceptor is the aspartate 186. Over residues 624–635 the composition is skewed to basic and acidic residues; sequence HEEKNSPPKEEG. Disordered regions lie at residues 624–658 and 674–714; these read HEEK…NCVK and KRHQ…KGQC. A compositionally biased stretch (polar residues) spans 692 to 703; it reads SPLQPTAPSSLS.

It belongs to the protein kinase superfamily. CAMK Ser/Thr protein kinase family. SNF1 subfamily.

It catalyses the reaction L-seryl-[protein] + ATP = O-phospho-L-seryl-[protein] + ADP + H(+). The enzyme catalyses L-threonyl-[protein] + ATP = O-phospho-L-threonyl-[protein] + ADP + H(+). The protein is Hormonally up-regulated neu tumor-associated kinase (Hunk) of Mus musculus (Mouse).